Consider the following 317-residue polypeptide: Acetyl-coenzyme A carboxylase carboxyl transferase subunit alpha (317 aa).

One can recognise a CoA carboxyltransferase C-terminal domain in the interval 38–292 (TLEERLARLE…DNIIKQSLVE (255 aa)).

It belongs to the AccA family. Acetyl-CoA carboxylase is a heterohexamer composed of biotin carboxyl carrier protein (AccB), biotin carboxylase (AccC) and two subunits each of ACCase subunit alpha (AccA) and ACCase subunit beta (AccD).

Its subcellular location is the cytoplasm. The catalysed reaction is N(6)-carboxybiotinyl-L-lysyl-[protein] + acetyl-CoA = N(6)-biotinyl-L-lysyl-[protein] + malonyl-CoA. Its pathway is lipid metabolism; malonyl-CoA biosynthesis; malonyl-CoA from acetyl-CoA: step 1/1. In terms of biological role, component of the acetyl coenzyme A carboxylase (ACC) complex. First, biotin carboxylase catalyzes the carboxylation of biotin on its carrier protein (BCCP) and then the CO(2) group is transferred by the carboxyltransferase to acetyl-CoA to form malonyl-CoA. The chain is Acetyl-coenzyme A carboxylase carboxyl transferase subunit alpha from Oceanobacillus iheyensis (strain DSM 14371 / CIP 107618 / JCM 11309 / KCTC 3954 / HTE831).